We begin with the raw amino-acid sequence, 162 residues long: Phosphopantetheine adenylyltransferase (162 aa).

Threonine 10 contacts substrate. ATP is bound by residues 10 to 11 (TF) and histidine 18. Substrate contacts are provided by lysine 42, methionine 74, and arginine 88. Residues 89–91 (GLR), glutamate 99, and 124–130 (YAFLSST) contribute to the ATP site.

It belongs to the bacterial CoaD family. As to quaternary structure, homohexamer. It depends on Mg(2+) as a cofactor.

The protein resides in the cytoplasm. The enzyme catalyses (R)-4'-phosphopantetheine + ATP + H(+) = 3'-dephospho-CoA + diphosphate. It functions in the pathway cofactor biosynthesis; coenzyme A biosynthesis; CoA from (R)-pantothenate: step 4/5. In terms of biological role, reversibly transfers an adenylyl group from ATP to 4'-phosphopantetheine, yielding dephospho-CoA (dPCoA) and pyrophosphate. The sequence is that of Phosphopantetheine adenylyltransferase from Aliivibrio fischeri (strain ATCC 700601 / ES114) (Vibrio fischeri).